The primary structure comprises 208 residues: ATP-dependent Clp protease proteolytic subunit (208 aa).

The Nucleophile role is filled by S112. The active site involves H137.

It belongs to the peptidase S14 family. In terms of assembly, fourteen ClpP subunits assemble into 2 heptameric rings which stack back to back to give a disk-like structure with a central cavity, resembling the structure of eukaryotic proteasomes.

The protein resides in the cytoplasm. The enzyme catalyses Hydrolysis of proteins to small peptides in the presence of ATP and magnesium. alpha-casein is the usual test substrate. In the absence of ATP, only oligopeptides shorter than five residues are hydrolyzed (such as succinyl-Leu-Tyr-|-NHMec, and Leu-Tyr-Leu-|-Tyr-Trp, in which cleavage of the -Tyr-|-Leu- and -Tyr-|-Trp bonds also occurs).. Its function is as follows. Cleaves peptides in various proteins in a process that requires ATP hydrolysis. Has a chymotrypsin-like activity. Plays a major role in the degradation of misfolded proteins. In Buchnera aphidicola subsp. Acyrthosiphon pisum (strain APS) (Acyrthosiphon pisum symbiotic bacterium), this protein is ATP-dependent Clp protease proteolytic subunit.